Here is a 211-residue protein sequence, read N- to C-terminus: Protein-methionine-sulfoxide reductase heme-binding subunit MsrQ (211 aa).

4 consecutive transmembrane segments (helical) span residues 17-37, 82-102, 116-136, and 153-173; these read LAGL…GLGA, LWCF…ELGV, PYLT…FTST, and FVYL…KIIS.

The protein belongs to the MsrQ family. In terms of assembly, heterodimer of a catalytic subunit (MsrP) and a heme-binding subunit (MsrQ). The cofactor is FMN. Heme b is required as a cofactor.

Its subcellular location is the cell inner membrane. Functionally, part of the MsrPQ system that repairs oxidized periplasmic proteins containing methionine sulfoxide residues (Met-O), using respiratory chain electrons. Thus protects these proteins from oxidative-stress damage caused by reactive species of oxygen and chlorine generated by the host defense mechanisms. MsrPQ is essential for the maintenance of envelope integrity under bleach stress, rescuing a wide series of structurally unrelated periplasmic proteins from methionine oxidation, including the primary periplasmic chaperone SurA and the lipoprotein Pal. MsrQ provides electrons for reduction to the reductase catalytic subunit MsrP, using the quinone pool of the respiratory chain. This is Protein-methionine-sulfoxide reductase heme-binding subunit MsrQ from Shigella sonnei (strain Ss046).